Here is a 330-residue protein sequence, read N- to C-terminus: DNA-directed RNA polymerase subunit alpha (330 aa).

The tract at residues 1–236 (MQGSVTEFLK…EQLDAFVDLR (236 aa)) is alpha N-terminal domain (alpha-NTD). The segment at 250 to 330 (FDPILLRPVD…NWPPASIAED (81 aa)) is alpha C-terminal domain (alpha-CTD).

Belongs to the RNA polymerase alpha chain family. As to quaternary structure, homodimer. The RNAP catalytic core consists of 2 alpha, 1 beta, 1 beta' and 1 omega subunit. When a sigma factor is associated with the core the holoenzyme is formed, which can initiate transcription.

The catalysed reaction is RNA(n) + a ribonucleoside 5'-triphosphate = RNA(n+1) + diphosphate. Its function is as follows. DNA-dependent RNA polymerase catalyzes the transcription of DNA into RNA using the four ribonucleoside triphosphates as substrates. The sequence is that of DNA-directed RNA polymerase subunit alpha from Vibrio campbellii (strain ATCC BAA-1116).